The chain runs to 212 residues: Octanoyltransferase (212 aa).

The BPL/LPL catalytic domain maps to 31-209 (AETQDEIWLV…HFANLLGYNI (179 aa)). Substrate-binding positions include 70–77 (RGGQITYH), 138–140 (SLG), and 151–153 (GLA). Cys-169 serves as the catalytic Acyl-thioester intermediate.

Belongs to the LipB family.

The protein localises to the cytoplasm. It catalyses the reaction octanoyl-[ACP] + L-lysyl-[protein] = N(6)-octanoyl-L-lysyl-[protein] + holo-[ACP] + H(+). The protein operates within protein modification; protein lipoylation via endogenous pathway; protein N(6)-(lipoyl)lysine from octanoyl-[acyl-carrier-protein]: step 1/2. In terms of biological role, catalyzes the transfer of endogenously produced octanoic acid from octanoyl-acyl-carrier-protein onto the lipoyl domains of lipoate-dependent enzymes. Lipoyl-ACP can also act as a substrate although octanoyl-ACP is likely to be the physiological substrate. The chain is Octanoyltransferase from Haemophilus influenzae (strain ATCC 51907 / DSM 11121 / KW20 / Rd).